We begin with the raw amino-acid sequence, 234 residues long: Thioredoxin-dependent peroxide reductase, mitochondrial (234 aa).

The N-terminal 30 residues, 1–30, are a transit peptide targeting the mitochondrion; that stretch reads MSFVARSLIRNVPLMGKAILSQQKQIAARL. The 159-residue stretch at 40-198 folds into the Thioredoxin domain; that stretch reads VRVQQPAPDF…VLRLIKAFQF (159 aa). Residue Cys-85 is the Cysteine sulfenic acid (-SOH) intermediate of the active site.

It belongs to the peroxiredoxin family. AhpC/Prx1 subfamily. Homodimer; disulfide-linked, upon oxidation. 6 homodimers assemble to form a ring-like dodecamer. Also exists as a monomer, however the monomeric form is present at a much lower level than the homodimeric form. In terms of tissue distribution, expressed in thoracic flight muscles (at protein level). Detected in the head and body (at protein level).

It is found in the mitochondrion. It catalyses the reaction a hydroperoxide + [thioredoxin]-dithiol = an alcohol + [thioredoxin]-disulfide + H2O. Thiol-specific peroxidase that catalyzes the reduction of hydrogen peroxide and organic hydroperoxides to water and alcohols, respectively. Plays a role in cell protection against oxidative stress by detoxifying peroxides. May be involved in aging-associated changes in the responsiveness to oxidative stress. Involved in the maintenance of global thiol redox homeostasis. Functions in the central nervous system (CNS) and in motor neurons and is essential for normal motor function. This is Thioredoxin-dependent peroxide reductase, mitochondrial from Drosophila melanogaster (Fruit fly).